The sequence spans 61 residues: Small ribosomal subunit protein uS14B (61 aa).

The Zn(2+) site is built by C24, C27, C40, and C43.

It belongs to the universal ribosomal protein uS14 family. Zinc-binding uS14 subfamily. Part of the 30S ribosomal subunit. Contacts proteins S3 and S10. The cofactor is Zn(2+).

In terms of biological role, binds 16S rRNA, required for the assembly of 30S particles and may also be responsible for determining the conformation of the 16S rRNA at the A site. The chain is Small ribosomal subunit protein uS14B from Salinispora arenicola (strain CNS-205).